A 158-amino-acid polypeptide reads, in one-letter code: Nascent polypeptide-associated complex subunit beta (158 aa).

Disordered stretches follow at residues 1–40 (MDQA…DKKL) and 119–158 (ESYQ…SKVE). Residues 16–31 (GKGKGTPRRKTKKVHK) are compositionally biased toward basic residues. The 66-residue stretch at 34–99 (GTDDKKLQTS…GEDKELTELV (66 aa)) folds into the NAC-A/B domain. Over residues 137–152 (DDDDDDEIPDLVEGEN) the composition is skewed to acidic residues.

Belongs to the NAC-beta family. In terms of assembly, part of the nascent polypeptide-associated complex (NAC), consisting of EGD2 and EGD1. NAC associates with ribosomes via EGD1.

Its subcellular location is the cytoplasm. The protein resides in the nucleus. Component of the nascent polypeptide-associated complex (NAC), a dynamic component of the ribosomal exit tunnel, protecting the emerging polypeptides from interaction with other cytoplasmic proteins to ensure appropriate nascent protein targeting. The NAC complex also promotes mitochondrial protein import by enhancing productive ribosome interactions with the outer mitochondrial membrane and blocks the inappropriate interaction of ribosomes translating non-secretory nascent polypeptides with translocation sites in the membrane of the endoplasmic reticulum. EGD1 may act as a transcription factor that exert a negative effect on the expression of several genes that are transcribed by RNA polymerase II. This is Nascent polypeptide-associated complex subunit beta (EGD1) from Ajellomyces capsulatus (strain NAm1 / WU24) (Darling's disease fungus).